Reading from the N-terminus, the 1150-residue chain is ATP-dependent helicase/deoxyribonuclease subunit B (1150 aa).

8-15 provides a ligand contact to ATP; sequence GRSGSGKS. Positions 789, 1108, 1111, and 1117 each coordinate [4Fe-4S] cluster.

This sequence belongs to the helicase family. AddB/RexB type 1 subfamily. Heterodimer of AddA and AddB. It depends on Mg(2+) as a cofactor. The cofactor is [4Fe-4S] cluster.

Functionally, the heterodimer acts as both an ATP-dependent DNA helicase and an ATP-dependent, dual-direction single-stranded exonuclease. Recognizes the chi site generating a DNA molecule suitable for the initiation of homologous recombination. The AddB subunit has 5' -&gt; 3' nuclease activity but not helicase activity. The protein is ATP-dependent helicase/deoxyribonuclease subunit B of Clostridium tetani (strain Massachusetts / E88).